The sequence spans 561 residues: ATP-dependent rRNA helicase RRP3 (561 aa).

Low complexity-rich tracts occupy residues 1–23 (MPKA…SSNS) and 30–45 (ASSP…PSTS). Positions 1-109 (MPKASASSAK…DEKKVATIAD (109 aa)) are disordered. Positions 100 to 109 (DEKKVATIAD) are enriched in basic and acidic residues. The Q motif motif lies at 114-142 (VEFSDLGVIPQIVEACTNMGFKHPTPIQV). In terms of domain architecture, Helicase ATP-binding spans 145-316 (IPEALQARDV…RASLKNPVRV (172 aa)). 158–165 (AQTGSGKT) contributes to the ATP binding site. Positions 264-267 (DEAD) match the DEAD box motif. Positions 339 to 487 (HKDTYLVHLA…EFPGGNDKEA (149 aa)) constitute a Helicase C-terminal domain. Positions 506–561 (LKDKGVGSAGGSGKRKRKMDGKYGDDMDRDDDQVQAGLPVSGNGRHQNQNRKKGRR) are disordered.

It belongs to the DEAD box helicase family. DDX47/RRP3 subfamily. As to quaternary structure, interacts with the SSU processome.

The protein resides in the nucleus. It catalyses the reaction ATP + H2O = ADP + phosphate + H(+). Its function is as follows. ATP-dependent rRNA helicase required for pre-ribosomal RNA processing. Involved in the maturation of the 35S-pre-rRNA and to its cleavage to mature 18S rRNA. This is ATP-dependent rRNA helicase RRP3 from Mycosarcoma maydis (Corn smut fungus).